The sequence spans 205 residues: Recombination protein RecR (205 aa).

The segment at 59–74 (CARCNTFCEGGLCDIC) adopts a C4-type zinc-finger fold. A Toprim domain is found at 82–177 (RRLMVVHMPA…KVSRLSQGIP (96 aa)).

It belongs to the RecR family.

May play a role in DNA repair. It seems to be involved in an RecBC-independent recombinational process of DNA repair. It may act with RecF and RecO. In Neisseria gonorrhoeae (strain ATCC 700825 / FA 1090), this protein is Recombination protein RecR.